A 199-amino-acid chain; its full sequence is Peptidyl-tRNA hydrolase (199 aa).

Tyrosine 18 provides a ligand contact to tRNA. Histidine 23 (proton acceptor) is an active-site residue. The tRNA site is built by tyrosine 72, asparagine 74, and asparagine 120.

It belongs to the PTH family. In terms of assembly, monomer.

The protein resides in the cytoplasm. It carries out the reaction an N-acyl-L-alpha-aminoacyl-tRNA + H2O = an N-acyl-L-amino acid + a tRNA + H(+). In terms of biological role, hydrolyzes ribosome-free peptidyl-tRNAs (with 1 or more amino acids incorporated), which drop off the ribosome during protein synthesis, or as a result of ribosome stalling. Its function is as follows. Catalyzes the release of premature peptidyl moieties from peptidyl-tRNA molecules trapped in stalled 50S ribosomal subunits, and thus maintains levels of free tRNAs and 50S ribosomes. This chain is Peptidyl-tRNA hydrolase, found in Bifidobacterium adolescentis (strain ATCC 15703 / DSM 20083 / NCTC 11814 / E194a).